Consider the following 276-residue polypeptide: ATP synthase subunit a (276 aa).

7 consecutive transmembrane segments (helical) span residues 49–69 (KPML…FAAA), 109–129 (YLFT…IPFI), 137–157 (SGMV…AGIS), 173–193 (GIRG…NILV), 203–223 (FANM…GEYI), 232–252 (APVG…EMLI), and 253–273 (QFLQ…GAVA).

The protein belongs to the ATPase A chain family. As to quaternary structure, F-type ATPases have 2 components, CF(1) - the catalytic core - and CF(0) - the membrane proton channel. CF(1) has five subunits: alpha(3), beta(3), gamma(1), delta(1), epsilon(1). CF(0) has three main subunits: a(1), b(2) and c(9-12). The alpha and beta chains form an alternating ring which encloses part of the gamma chain. CF(1) is attached to CF(0) by a central stalk formed by the gamma and epsilon chains, while a peripheral stalk is formed by the delta and b chains.

The protein resides in the cell membrane. In terms of biological role, key component of the proton channel; it plays a direct role in the translocation of protons across the membrane. The sequence is that of ATP synthase subunit a from Nocardioides sp. (strain ATCC BAA-499 / JS614).